A 432-amino-acid chain; its full sequence is Isocitrate lyase (432 aa).

Positions 1–24 (MSNVGKPRTAQEIQQDWDTNPRWN) are disordered. The span at 11-22 (QEIQQDWDTNPR) shows a compositional bias: polar residues. 93–95 (SGW) is a binding site for substrate. Position 155 (Asp-155) interacts with Mg(2+). Cys-193 acts as the Proton acceptor in catalysis. Substrate contacts are provided by residues 194–195 (GH), Arg-230, 315–319 (NCSPS), and Thr-349.

Belongs to the isocitrate lyase/PEP mutase superfamily. Isocitrate lyase family. Homotetramer. Mg(2+) is required as a cofactor.

It catalyses the reaction D-threo-isocitrate = glyoxylate + succinate. The protein operates within carbohydrate metabolism; glyoxylate cycle; (S)-malate from isocitrate: step 1/2. Inhibited by 3-phosphoglycerate, 6-phosphogluconate, phosphoenolpyruvate (PEP), fructose 1,6-bisphosphate, glycolate, oxalate, and itaconate. Its function is as follows. Involved in the metabolic adaptation in response to environmental changes. Catalyzes the reversible formation of succinate and glyoxylate from isocitrate, a key step of the glyoxylate cycle, which operates as an anaplerotic route for replenishing the tricarboxylic acid cycle during growth on fatty acid substrates. The protein is Isocitrate lyase of Corynebacterium glutamicum (strain ATCC 13032 / DSM 20300 / JCM 1318 / BCRC 11384 / CCUG 27702 / LMG 3730 / NBRC 12168 / NCIMB 10025 / NRRL B-2784 / 534).